Consider the following 314-residue polypeptide: tRNA dimethylallyltransferase (314 aa).

Gly36–Thr43 lines the ATP pocket. Residue Thr38 to Thr43 participates in substrate binding. The interval Asp61–Gln64 is interaction with substrate tRNA.

This sequence belongs to the IPP transferase family. As to quaternary structure, monomer. Mg(2+) is required as a cofactor.

It catalyses the reaction adenosine(37) in tRNA + dimethylallyl diphosphate = N(6)-dimethylallyladenosine(37) in tRNA + diphosphate. Functionally, catalyzes the transfer of a dimethylallyl group onto the adenine at position 37 in tRNAs that read codons beginning with uridine, leading to the formation of N6-(dimethylallyl)adenosine (i(6)A). The chain is tRNA dimethylallyltransferase from Sorangium cellulosum (strain So ce56) (Polyangium cellulosum (strain So ce56)).